Here is a 490-residue protein sequence, read N- to C-terminus: N-succinylglutamate 5-semialdehyde dehydrogenase (490 aa).

NAD(+) is bound at residue 223 to 228 (GSSRTG). Active-site residues include Glu246 and Cys280.

This sequence belongs to the aldehyde dehydrogenase family. AstD subfamily.

The enzyme catalyses N-succinyl-L-glutamate 5-semialdehyde + NAD(+) + H2O = N-succinyl-L-glutamate + NADH + 2 H(+). It functions in the pathway amino-acid degradation; L-arginine degradation via AST pathway; L-glutamate and succinate from L-arginine: step 4/5. In terms of biological role, catalyzes the NAD-dependent reduction of succinylglutamate semialdehyde into succinylglutamate. This chain is N-succinylglutamate 5-semialdehyde dehydrogenase, found in Pseudoalteromonas atlantica (strain T6c / ATCC BAA-1087).